The sequence spans 412 residues: Divalent metal cation transporter MntH (412 aa).

Topologically, residues 1–19 are cytoplasmic; the sequence is MTNYRVESSSGRAARKMRL. A helical transmembrane segment spans residues 20–39; sequence ALMGPAFIAAIGYIDPGNFA. Residues 40–51 are Periplasmic-facing; it reads TNIQAGASFGYQ. A helical membrane pass occupies residues 52–71; sequence LLWVVVWANLMAMLIQILSA. Over 72-95 the chain is Cytoplasmic; that stretch reads KLGIATGKNLAEQIRDHYPRPFVW. A helical transmembrane segment spans residues 96–118; that stretch reads FYWVQAEIIAMATDLAEFIGAAI. The Periplasmic portion of the chain corresponds to 119-125; that stretch reads GFKLILG. The chain crosses the membrane as a helical span at residues 126-145; sequence VSLLQGAVLTGIATFLILML. Over 146–155 the chain is Cytoplasmic; the sequence is QRRGQKPLEK. A helical transmembrane segment spans residues 156–175; the sequence is VIGGLLLFVAAAYIVELIFS. The Periplasmic segment spans residues 176–196; that stretch reads QPNLAQLGKGMVIPSLPTSEA. A helical membrane pass occupies residues 197-220; that stretch reads VFLAAGVLGATIMPHVIYLHSSLT. The Cytoplasmic segment spans residues 221–238; that stretch reads QHLHGGSRQQRYSATKWD. Residues 239 to 258 form a helical membrane-spanning segment; that stretch reads VAIAMTIAGFVNLAMMATAA. The Periplasmic portion of the chain corresponds to 259-276; the sequence is AAFHFSGHTGVADLDEAY. A helical transmembrane segment spans residues 277-297; the sequence is LTLQPLLSHAAATVFGLSLVA. Residues 298–327 lie on the Cytoplasmic side of the membrane; the sequence is AGLSSTVVGTLAGQVVMQGFIRFHIPLWVR. The helical transmembrane segment at 328–344 threads the bilayer; sequence RTVTMLPSFIVILMGLD. Topologically, residues 345–350 are periplasmic; that stretch reads PTRILV. Residues 351–370 traverse the membrane as a helical segment; sequence MSQVLLSFGIALALVPLLIF. Over 371 to 387 the chain is Cytoplasmic; that stretch reads TSDSKLMGDLVNSKRVK. The helical transmembrane segment at 388-406 threads the bilayer; that stretch reads QTGWVIVVLVVALNIWLLV. The Periplasmic segment spans residues 407–412; the sequence is GTALGL.

This sequence belongs to the NRAMP family.

It localises to the cell inner membrane. In terms of biological role, h(+)-stimulated, divalent metal cation uptake system. The sequence is that of Divalent metal cation transporter MntH from Escherichia coli O127:H6 (strain E2348/69 / EPEC).